The sequence spans 486 residues: Pup--protein ligase (486 aa).

Glutamate 33 provides a ligand contact to Mg(2+). Arginine 76 provides a ligand contact to ATP. Position 78 (tyrosine 78) interacts with Mg(2+). The active-site Proton acceptor is the aspartate 80. Residue glutamate 86 participates in Mg(2+) binding. ATP-binding residues include threonine 89 and tryptophan 451.

The protein belongs to the Pup ligase/Pup deamidase family. Pup-conjugating enzyme subfamily.

It catalyses the reaction ATP + [prokaryotic ubiquitin-like protein]-L-glutamate + [protein]-L-lysine = ADP + phosphate + N(6)-([prokaryotic ubiquitin-like protein]-gamma-L-glutamyl)-[protein]-L-lysine.. It functions in the pathway protein degradation; proteasomal Pup-dependent pathway. The protein operates within protein modification; protein pupylation. Catalyzes the covalent attachment of the prokaryotic ubiquitin-like protein modifier Pup to the proteasomal substrate proteins, thereby targeting them for proteasomal degradation. This tagging system is termed pupylation. The ligation reaction involves the side-chain carboxylate of the C-terminal glutamate of Pup and the side-chain amino group of a substrate lysine. The polypeptide is Pup--protein ligase (Bifidobacterium longum (strain NCC 2705)).